The following is a 426-amino-acid chain: tRNA(Ile)-lysidine synthase (426 aa).

An ATP-binding site is contributed by 19–24 (SGGLDS).

Belongs to the tRNA(Ile)-lysidine synthase family.

The protein localises to the cytoplasm. The catalysed reaction is cytidine(34) in tRNA(Ile2) + L-lysine + ATP = lysidine(34) in tRNA(Ile2) + AMP + diphosphate + H(+). In terms of biological role, ligates lysine onto the cytidine present at position 34 of the AUA codon-specific tRNA(Ile) that contains the anticodon CAU, in an ATP-dependent manner. Cytidine is converted to lysidine, thus changing the amino acid specificity of the tRNA from methionine to isoleucine. The protein is tRNA(Ile)-lysidine synthase of Neisseria meningitidis serogroup A / serotype 4A (strain DSM 15465 / Z2491).